Here is a 543-residue protein sequence, read N- to C-terminus: Cytochrome P450 1B1 (543 aa).

Cys-470 serves as a coordination point for heme.

This sequence belongs to the cytochrome P450 family. Heme is required as a cofactor.

The protein resides in the endoplasmic reticulum membrane. Its subcellular location is the microsome membrane. It localises to the mitochondrion. It catalyses the reaction an organic molecule + reduced [NADPH--hemoprotein reductase] + O2 = an alcohol + oxidized [NADPH--hemoprotein reductase] + H2O + H(+). The enzyme catalyses 17beta-estradiol + reduced [NADPH--hemoprotein reductase] + O2 = 2-hydroxy-17beta-estradiol + oxidized [NADPH--hemoprotein reductase] + H2O + H(+). It carries out the reaction 17beta-estradiol + reduced [NADPH--hemoprotein reductase] + O2 = 4-hydroxy-17beta-estradiol + oxidized [NADPH--hemoprotein reductase] + H2O + H(+). The catalysed reaction is estrone + reduced [NADPH--hemoprotein reductase] + O2 = 2-hydroxyestrone + oxidized [NADPH--hemoprotein reductase] + H2O + H(+). It catalyses the reaction estrone + reduced [NADPH--hemoprotein reductase] + O2 = 4-hydroxyestrone + oxidized [NADPH--hemoprotein reductase] + H2O + H(+). The enzyme catalyses testosterone + reduced [NADPH--hemoprotein reductase] + O2 = 6beta,17beta-dihydroxyandrost-4-en-3-one + oxidized [NADPH--hemoprotein reductase] + H2O + H(+). It carries out the reaction progesterone + reduced [NADPH--hemoprotein reductase] + O2 = 6beta-hydroxyprogesterone + oxidized [NADPH--hemoprotein reductase] + H2O + H(+). The catalysed reaction is progesterone + reduced [NADPH--hemoprotein reductase] + O2 = 16alpha-hydroxyprogesterone + oxidized [NADPH--hemoprotein reductase] + H2O + H(+). It catalyses the reaction all-trans-retinol + reduced [NADPH--hemoprotein reductase] + O2 = all-trans-retinal + oxidized [NADPH--hemoprotein reductase] + 2 H2O + H(+). The enzyme catalyses all-trans-retinal + reduced [NADPH--hemoprotein reductase] + O2 = all-trans-retinoate + oxidized [NADPH--hemoprotein reductase] + H2O + 2 H(+). It carries out the reaction (5Z,8Z,11Z,14Z)-eicosatetraenoate + reduced [NADPH--hemoprotein reductase] + O2 = (8R,9S)-epoxy-(5Z,11Z,14Z)-eicosatrienoate + oxidized [NADPH--hemoprotein reductase] + H2O + H(+). The catalysed reaction is (5Z,8Z,11Z,14Z)-eicosatetraenoate + reduced [NADPH--hemoprotein reductase] + O2 = (11R,12S)-epoxy-(5Z,8Z,14Z)-eicosatrienoate + oxidized [NADPH--hemoprotein reductase] + H2O + H(+). It catalyses the reaction (5Z,8Z,11Z,14Z)-eicosatetraenoate + reduced [NADPH--hemoprotein reductase] + O2 = (11S,12R)-epoxy-(5Z,8Z,14Z)-eicosatrienoate + oxidized [NADPH--hemoprotein reductase] + H2O + H(+). The enzyme catalyses (5Z,8Z,11Z,14Z)-eicosatetraenoate + reduced [NADPH--hemoprotein reductase] + O2 = (14S,15R)-epoxy-(5Z,8Z,11Z)-eicosatrienoate + oxidized [NADPH--hemoprotein reductase] + H2O + H(+). It carries out the reaction (5Z,8Z,11Z,14Z)-eicosatetraenoate + reduced [NADPH--hemoprotein reductase] + O2 = (14R,15S)-epoxy-(5Z,8Z,11Z)-eicosatrienoate + oxidized [NADPH--hemoprotein reductase] + H2O + H(+). The catalysed reaction is (5S)-hydroperoxy-(6E,8Z,11Z,14Z)-eicosatetraenoate = 5-oxo-(6E,8Z,11Z,14Z)-eicosatetraenoate + H2O. It catalyses the reaction (12S)-hydroperoxy-(5Z,8Z,10E,14Z)-eicosatetraenoate = 12-oxo-(5Z,8Z,10E,14Z)-eicosatetraenoate + H2O. The enzyme catalyses (15S)-hydroperoxy-(5Z,8Z,11Z,13E)-eicosatetraenoate = 15-oxo-(5Z,8Z,11Z,13E)-eicosatetraenoate + H2O. It carries out the reaction (13S)-hydroperoxy-(9Z,11E)-octadecadienoate = 13-oxo-(9Z,11E)-octadecadienoate + H2O. It participates in steroid hormone biosynthesis. It functions in the pathway cofactor metabolism; retinol metabolism. Its pathway is lipid metabolism; arachidonate metabolism. With respect to regulation, enzyme activity is increased by cytochrome b5. Enzyme activity is increased by liposomes containing anionic phospholipids, phosphatidic acid and cardiolipin. Inhibited by naringenin with an IC(50) of 5 uM. Functionally, a cytochrome P450 monooxygenase involved in the metabolism of various endogenous substrates, including fatty acids, steroid hormones and vitamins. Mechanistically, uses molecular oxygen inserting one oxygen atom into a substrate, and reducing the second into a water molecule, with two electrons provided by NADPH via cytochrome P450 reductase (NADPH--hemoprotein reductase). Exhibits catalytic activity for the formation of hydroxyestrogens from 17beta-estradiol (E2), namely 2- and 4-hydroxy E2. Metabolizes testosterone and progesterone to B or D ring hydroxylated metabolites. May act as a major enzyme for all-trans retinoic acid biosynthesis in extrahepatic tissues. Catalyzes two successive oxidative transformation of all-trans retinol to all-trans retinal and then to the active form all-trans retinoic acid. Catalyzes the epoxidation of double bonds of certain PUFA. Converts arachidonic acid toward epoxyeicosatrienoic acid (EpETrE) regioisomers, 8,9-, 11,12-, and 14,15- EpETrE, that function as lipid mediators in the vascular system. Additionally, displays dehydratase activity toward oxygenated eicosanoids including hydroperoxyeicosatetraenoates (HpETEs). This activity is independent of cytochrome P450 reductase, NADPH, and O2. Also involved in the oxidative metabolism of xenobiotics, particularly converting polycyclic aromatic hydrocarbons and heterocyclic aryl amines procarcinogens to DNA-damaging products. Plays an important role in retinal vascular development. Under ambient/hyperoxic O2 conditions, promotes angiogenesis and capillary morphogenesis of retinal endothelial cells and pericytes, likely by metabolizing the oxygenated products symptomatic of oxidative stress. Also, contributes to oxidative homeostasis and ultrastructural organization and function of trabecular meshwork tissue through modulation of POSTN expression. The polypeptide is Cytochrome P450 1B1 (Rattus norvegicus (Rat)).